The chain runs to 56 residues: Large ribosomal subunit protein bL32A (56 aa).

The disordered stretch occupies residues 1–56 (MAVPARRTSKAKKNKRRTHKGLTAPGLSRDSETGEYRMSHRISPDGTYKGRTIIEK). Basic residues predominate over residues 7–20 (RTSKAKKNKRRTHK). The segment covering 29 to 38 (RDSETGEYRM) has biased composition (basic and acidic residues).

The protein belongs to the bacterial ribosomal protein bL32 family.

The protein is Large ribosomal subunit protein bL32A (rpmF1) of Listeria innocua serovar 6a (strain ATCC BAA-680 / CLIP 11262).